The chain runs to 430 residues: Histidine--tRNA ligase (430 aa).

This sequence belongs to the class-II aminoacyl-tRNA synthetase family. Homodimer.

It is found in the cytoplasm. It catalyses the reaction tRNA(His) + L-histidine + ATP = L-histidyl-tRNA(His) + AMP + diphosphate + H(+). This Clostridium acetobutylicum (strain ATCC 824 / DSM 792 / JCM 1419 / IAM 19013 / LMG 5710 / NBRC 13948 / NRRL B-527 / VKM B-1787 / 2291 / W) protein is Histidine--tRNA ligase (hisS).